The following is a 317-amino-acid chain: Cell division protein FtsX (317 aa).

Over 1–39 the chain is Cytoplasmic; the sequence is MAIVRHKQPPLRRFMMYWVDHARQAFSSLGELWRNPLAS. A helical membrane pass occupies residues 40 to 60; that stretch reads LMTLAVLGVSLALPSCFHVLL. Residues 61 to 188 are Periplasmic-facing; the sequence is KNAEVVEGSW…LQGIMNLLRH (128 aa). Residues 189-209 traverse the membrane as a helical segment; it reads TITGIAVLLLSAVLLIVGNTL. Residues 210-241 lie on the Cytoplasmic side of the membrane; the sequence is RLNILNQRSEIEVLKLVGATDAFIHRPFLYTG. The chain crosses the membrane as a helical span at residues 242–262; it reads IWFGVIGGMLAWWLTEVMVIW. The Periplasmic segment spans residues 263–280; sequence SEGVVNELAGLYNSNFRL. A helical transmembrane segment spans residues 281–301; sequence VGMGAVDGINLILLGALLGLI. The Cytoplasmic segment spans residues 302-317; the sequence is ASWFSVHRHIRDIEPS.

The protein belongs to the ABC-4 integral membrane protein family. FtsX subfamily. In terms of assembly, forms a membrane-associated complex with FtsE.

The protein localises to the cell inner membrane. Functionally, part of the ABC transporter FtsEX involved in cellular division. Encoded in an operon consisting of genes ftsY, ftsE and ftsX. The protein is Cell division protein FtsX of Aeromonas hydrophila.